The chain runs to 242 residues: tRNA uridine(34) hydroxylase (242 aa).

Positions 128-222 constitute a Rhodanese domain; that stretch reads DGREVVMLDT…YFEETGGPGY (95 aa). Cys-182 (cysteine persulfide intermediate) is an active-site residue.

Belongs to the TrhO family.

The enzyme catalyses uridine(34) in tRNA + AH2 + O2 = 5-hydroxyuridine(34) in tRNA + A + H2O. Functionally, catalyzes oxygen-dependent 5-hydroxyuridine (ho5U) modification at position 34 in tRNAs. This chain is tRNA uridine(34) hydroxylase, found in Bordetella avium (strain 197N).